Consider the following 505-residue polypeptide: Maturase K (505 aa).

The protein belongs to the intron maturase 2 family. MatK subfamily.

The protein localises to the plastid. It is found in the chloroplast. Usually encoded in the trnK tRNA gene intron. Probably assists in splicing its own and other chloroplast group II introns. This chain is Maturase K, found in Kunzea ericoides (White teatree).